We begin with the raw amino-acid sequence, 158 residues long: Small ribosomal subunit protein bS6 (158 aa).

Positions 92 to 149 are enriched in basic and acidic residues; the sequence is RVDEHEEGPSAMMRKADRDRERDDRGPREGGFRGDREGRGDRDGFRGDRGPRRPREDA. A disordered region spans residues 92 to 158; the sequence is RVDEHEEGPS…ADAPAAAVEE (67 aa).

The protein belongs to the bacterial ribosomal protein bS6 family.

Its function is as follows. Binds together with bS18 to 16S ribosomal RNA. The sequence is that of Small ribosomal subunit protein bS6 from Rhodopseudomonas palustris (strain ATCC BAA-98 / CGA009).